The sequence spans 318 residues: tRNA-cytidine(32) 2-sulfurtransferase (318 aa).

Positions 52-57 (SGGKDS) match the PP-loop motif motif. [4Fe-4S] cluster contacts are provided by C127, C130, and C218.

This sequence belongs to the TtcA family. As to quaternary structure, homodimer. It depends on Mg(2+) as a cofactor. The cofactor is [4Fe-4S] cluster.

It is found in the cytoplasm. It catalyses the reaction cytidine(32) in tRNA + S-sulfanyl-L-cysteinyl-[cysteine desulfurase] + AH2 + ATP = 2-thiocytidine(32) in tRNA + L-cysteinyl-[cysteine desulfurase] + A + AMP + diphosphate + H(+). It functions in the pathway tRNA modification. Its function is as follows. Catalyzes the ATP-dependent 2-thiolation of cytidine in position 32 of tRNA, to form 2-thiocytidine (s(2)C32). The sulfur atoms are provided by the cysteine/cysteine desulfurase (IscS) system. In Actinobacillus pleuropneumoniae serotype 3 (strain JL03), this protein is tRNA-cytidine(32) 2-sulfurtransferase.